A 497-amino-acid chain; its full sequence is Serine/arginine-rich protein PSR (497 aa).

The first 19 residues, 1 to 19 (MYSRCIALVFVGLLASSLA), serve as a signal peptide directing secretion. Over 20–366 (ANCYGPAGKL…HHGLSSQKLG (347 aa)) the chain is Extracellular. Asn92, Asn193, Asn202, Asn261, and Asn283 each carry an N-linked (GlcNAc...) asparagine glycan. A helical transmembrane segment spans residues 367–387 (LAIGLPIAGVFLIILIAAAII). The Cytoplasmic portion of the chain corresponds to 388 to 497 (YYRKRRESEK…ESASRDSDSD (110 aa)). The necessary for phosphorylation by PSRPK in vitro stretch occupies residues 424–450 (MGSKTMQAMLDMRDDDESEHDSDDGYG). Residues 436–447 (RDDDESEHDSDD) are compositionally biased toward acidic residues. The tract at residues 436-497 (RDDDESEHDS…ESASRDSDSD (62 aa)) is disordered. Residues 459–471 (GRSRSRSRSRSVS) are compositionally biased toward basic residues. The segment covering 476–497 (GSRDARSESDPGESASRDSDSD) has biased composition (basic and acidic residues).

Post-translationally, phosphorylated on serine residues in the RS domain by PSRPK.

The protein localises to the membrane. This is Serine/arginine-rich protein PSR from Physarum polycephalum (Slime mold).